The sequence spans 420 residues: Nucleobindin-2 (420 aa).

An N-terminal signal peptide occupies residues 1–24 (MRWRTILLQYCFLLITCLLTALEA). The DNA-binding element occupies 171 to 223 (KTRHEEFKKYEMMKEHERREYLKTLNEEKRKEEESKFEEMKKKHENHPKVNHP). Over residues 195–212 (LNEEKRKEEESKFEEMKK) the composition is skewed to basic and acidic residues. A disordered region spans residues 195 to 225 (LNEEKRKEEESKFEEMKKKHENHPKVNHPGS). The interval 213-420 (KHENHPKVNH…AGELKFEPHI (208 aa)) is binds to necdin. 2 EF-hand domains span residues 241-276 (PNDF…ELEK) and 293-328 (ERLR…KEFL). Positions 254 and 256 each coordinate Ca(2+). Ser257 carries the phosphoserine modification. Ca(2+) contacts are provided by Asp258, Glu265, Asp306, Asn308, Asp310, and Glu317. The GBA motif lies at 304–334 (EVDTNKDRLVTLEEFLKATEKKEFLEPDSWE). At Ser332 the chain carries Phosphoserine. Residues 398–420 (QKKLQQGIPPSGPAGELKFEPHI) form a disordered region.

This sequence belongs to the nucleobindin family. In terms of assembly, interacts (via GBA motif) with guanine nucleotide-binding protein G(i) alpha subunit GNAI3. Preferentially interacts with inactive rather than active GNAI3. Interaction with GNAI3 is inhibited when NUCB2 binds calcium, probably due to a conformational change which renders the GBA motif inaccessible. Binds to the postmitotic growth suppressor NDN; coexpression abolishes NUCB2 secretion. Interacts with MC4R. In terms of tissue distribution, predominantly expressed in spleen, testis and normal stomach.

The protein resides in the golgi apparatus. The protein localises to the membrane. Its subcellular location is the cytoplasm. It localises to the secreted. It is found in the endoplasmic reticulum. The protein resides in the nucleus envelope. Calcium-binding protein which may have a role in calcium homeostasis. Acts as a non-receptor guanine nucleotide exchange factor which binds to and activates guanine nucleotide-binding protein (G-protein) alpha subunit GNAI3. In terms of biological role, anorexigenic peptide, seems to play an important role in hypothalamic pathways regulating food intake and energy homeostasis, acting in a leptin-independent manner. May also exert hypertensive roles and modulate blood pressure through directly acting on peripheral arterial resistance. In intestinal epithelial cells, plays a role in the inhibition of hepatic glucose production via MC4R receptor leading to increased cyclic adenosine monophosphate (cAMP) levels and glucagon-like peptide 1 (GLP-1) secretion. The chain is Nucleobindin-2 from Homo sapiens (Human).